A 149-amino-acid chain; its full sequence is Large ribosomal subunit protein bL9 (149 aa).

Belongs to the bacterial ribosomal protein bL9 family.

In terms of biological role, binds to the 23S rRNA. In Acidothermus cellulolyticus (strain ATCC 43068 / DSM 8971 / 11B), this protein is Large ribosomal subunit protein bL9.